Here is a 638-residue protein sequence, read N- to C-terminus: Autolysin (638 aa).

Residues 1–28 form the signal peptide; that stretch reads MSLATRRFGAAAALLVAACVLCTAPAWA. Positions 29-183 are cleaved as a propeptide — activation peptide; the sequence is QNETTGTGMV…LKSILKGSQK (155 aa). A glycan (N-linked (GlcNAc...) asparagine) is linked at N30. The short motif at 95-102 is the Cysteine switch element; that stretch reads PRCNVPRA. C97 provides a ligand contact to Zn(2+). N126 carries an N-linked (GlcNAc...) asparagine glycan. A disordered region spans residues 269–292; the sequence is VTPPPRPPRPPRPPPRAGSTISSL. Residues 270 to 284 show a composition bias toward pro residues; that stretch reads TPPPRPPRPPRPPPR. A glycan (N-linked (GlcNAc...) asparagine) is linked at N296. Position 396 (H396) interacts with Zn(2+). E397 is an active-site residue. Residues H400 and H406 each coordinate Zn(2+). N-linked (GlcNAc...) asparagine glycosylation is found at N458, N465, N470, and N523.

The protein belongs to the peptidase M11 family. Zn(2+) serves as cofactor. Present in 2 forms: an inactive V-form in vegetative cells and an active and soluble G-form. The V-form enzyme may be converted to the G-form enzyme during gametic differentiation under nitrogen-starved conditions.

The protein resides in the periplasm. The protein localises to the secreted. It localises to the cell wall. The catalysed reaction is Cleavage of the proline- and hydroxyproline-rich proteins of the Chlamydomonas cell wall. Also cleaves azocasein, gelatin and Leu-Trp-Met-|-Arg-Phe-Ala.. In terms of biological role, mediates digestion of the cell walls of the 2 mating type gametes during mating as a necessary prelude to cell fusion. This enzyme acts specifically on the framework proteins (inner wall) of the cell wall, cleaving several model peptides at specific sites. The sequence is that of Autolysin from Chlamydomonas reinhardtii (Chlamydomonas smithii).